Consider the following 292-residue polypeptide: MKQRTIKRPVEAIGIGLHKGVPVKLRLEPMAEDSGIVFYRSDKGVSIPLSPDYVVDTKMATVIGNEGVMVSTIEHLMSAIYAFGIDNLRIIVDNDEVPIMDGSAISFVMMIEEAGIKELEAPKKFIKITKEVEIKDGDKFAKLKPNEKISFDFEINFDHPVIGNQKYMFNFSTKNYIEEIARARTFGFLKEVQYLRSIGLALGGSLENAIVLDDKKILNDSLRFEDEFVRHKILDAIGDMSLLGGNFIGSYEAFASGHHLNHLLTKELVAQEAFEIVTFEKEGEKAVAKAFS.

Residues His75, His231, and Asp235 each coordinate Zn(2+). Residue His258 is the Proton donor of the active site.

The protein belongs to the LpxC family. The cofactor is Zn(2+).

It catalyses the reaction a UDP-3-O-[(3R)-3-hydroxyacyl]-N-acetyl-alpha-D-glucosamine + H2O = a UDP-3-O-[(3R)-3-hydroxyacyl]-alpha-D-glucosamine + acetate. It functions in the pathway glycolipid biosynthesis; lipid IV(A) biosynthesis; lipid IV(A) from (3R)-3-hydroxytetradecanoyl-[acyl-carrier-protein] and UDP-N-acetyl-alpha-D-glucosamine: step 2/6. Functionally, catalyzes the hydrolysis of UDP-3-O-myristoyl-N-acetylglucosamine to form UDP-3-O-myristoylglucosamine and acetate, the committed step in lipid A biosynthesis. The protein is UDP-3-O-acyl-N-acetylglucosamine deacetylase of Nautilia profundicola (strain ATCC BAA-1463 / DSM 18972 / AmH).